The primary structure comprises 555 residues: Phosphomethylpyrimidine synthase (555 aa).

Substrate is bound by residues asparagine 191, methionine 220, tyrosine 249, histidine 285, 305–307, 346–349, and glutamate 385; these read SRG and DGLR. Position 389 (histidine 389) interacts with Zn(2+). Tyrosine 412 provides a ligand contact to substrate. Histidine 453 contributes to the Zn(2+) binding site. Positions 533, 536, and 541 each coordinate [4Fe-4S] cluster.

Belongs to the ThiC family. Homodimer. Requires [4Fe-4S] cluster as cofactor.

The enzyme catalyses 5-amino-1-(5-phospho-beta-D-ribosyl)imidazole + S-adenosyl-L-methionine = 4-amino-2-methyl-5-(phosphooxymethyl)pyrimidine + CO + 5'-deoxyadenosine + formate + L-methionine + 3 H(+). It participates in cofactor biosynthesis; thiamine diphosphate biosynthesis. In terms of biological role, catalyzes the synthesis of the hydroxymethylpyrimidine phosphate (HMP-P) moiety of thiamine from aminoimidazole ribotide (AIR) in a radical S-adenosyl-L-methionine (SAM)-dependent reaction. The protein is Phosphomethylpyrimidine synthase of Ehrlichia ruminantium (strain Welgevonden).